Consider the following 145-residue polypeptide: Lysozyme-like protein 4 (145 aa).

A signal peptide spans 1-19; sequence MQLYLVLLLISYLLTPIGA. Residues 20–145 enclose the C-type lysozyme domain; sequence SILGRCVVAK…LDRWLDGCEL (126 aa). Cystine bridges form between Cys-25–Cys-143, Cys-49–Cys-130, Cys-84–Cys-95, and Cys-91–Cys-109. Residue Glu-54 is part of the active site.

The protein belongs to the glycosyl hydrolase 22 family. As to quaternary structure, monomer. As to expression, expressed in the brain, lung, ovary, uterus and testis. In testis expressed in the germinal epithelium and on the maturing spermatozoa (at protein level).

The protein localises to the secreted. The protein resides in the cytoplasmic vesicle. Its subcellular location is the secretory vesicle. It localises to the acrosome. It is found in the cell projection. The protein localises to the cilium. The protein resides in the flagellum. Its function is as follows. May be involved in fertilization. Has no detectable bacteriolytic and lysozyme activities in vitro. The sequence is that of Lysozyme-like protein 4 (Lyzl4) from Rattus norvegicus (Rat).